A 277-amino-acid chain; its full sequence is Urease accessory protein UreD (277 aa).

It belongs to the UreD family. UreD, UreF and UreG form a complex that acts as a GTP-hydrolysis-dependent molecular chaperone, activating the urease apoprotein by helping to assemble the nickel containing metallocenter of UreC. The UreE protein probably delivers the nickel.

It localises to the cytoplasm. Required for maturation of urease via the functional incorporation of the urease nickel metallocenter. The sequence is that of Urease accessory protein UreD from Yersinia pestis bv. Antiqua (strain Antiqua).